We begin with the raw amino-acid sequence, 137 residues long: Integration host factor subunit beta (137 aa).

Over residues 75-92 (KRVPHFKAGKELRERVDR) the composition is skewed to basic and acidic residues. Residues 75–137 (KRVPHFKAGK…EGGGLNLARS (63 aa)) are disordered. Residues 128 to 137 (EGGGLNLARS) are compositionally biased toward gly residues.

Belongs to the bacterial histone-like protein family. As to quaternary structure, heterodimer of an alpha and a beta chain.

Functionally, this protein is one of the two subunits of integration host factor, a specific DNA-binding protein that functions in genetic recombination as well as in transcriptional and translational control. The sequence is that of Integration host factor subunit beta from Cupriavidus pinatubonensis (strain JMP 134 / LMG 1197) (Cupriavidus necator (strain JMP 134)).